The primary structure comprises 425 residues: Nuclear pore complex-interacting protein family member B6 (425 aa).

Residues 332–414 (SPLPPSVDDN…RRLSKLRTRH (83 aa)) form a disordered region. The segment covering 353-395 (EVEKPPKPKRWRVDEVEQSPKPKRRRVDEVEQSPKPKRQREAE) has biased composition (basic and acidic residues). Over residues 401–414 (KPKRRRLSKLRTRH) the composition is skewed to basic residues.

The protein belongs to the NPIP family.

The sequence is that of Nuclear pore complex-interacting protein family member B6 (NPIPB6) from Homo sapiens (Human).